Reading from the N-terminus, the 161-residue chain is Phosphopantetheine adenylyltransferase (161 aa).

T9 provides a ligand contact to substrate. ATP-binding positions include 9-10 and H17; that span reads TF. 3 residues coordinate substrate: K41, L73, and R87. ATP contacts are provided by residues 88-90, E98, and 123-129; these read GLR and YQFISGT.

Belongs to the bacterial CoaD family. Homohexamer. Mg(2+) is required as a cofactor.

The protein localises to the cytoplasm. It catalyses the reaction (R)-4'-phosphopantetheine + ATP + H(+) = 3'-dephospho-CoA + diphosphate. The protein operates within cofactor biosynthesis; coenzyme A biosynthesis; CoA from (R)-pantothenate: step 4/5. Its function is as follows. Reversibly transfers an adenylyl group from ATP to 4'-phosphopantetheine, yielding dephospho-CoA (dPCoA) and pyrophosphate. This is Phosphopantetheine adenylyltransferase from Cupriavidus taiwanensis (strain DSM 17343 / BCRC 17206 / CCUG 44338 / CIP 107171 / LMG 19424 / R1) (Ralstonia taiwanensis (strain LMG 19424)).